A 236-amino-acid chain; its full sequence is Baculoviral IAP repeat-containing protein 8 (236 aa).

One copy of the BIR repeat lies at 7–70; it reads WLITFGTWMY…KWYPGCKYLL (64 aa). Positions 39, 42, 59, and 66 each coordinate Zn(2+). Residues 189–224 form an RING-type zinc finger; it reads CKICMDRHIAVVFIPCGHLVTCKQCAEAVDRCPMCN.

The protein belongs to the IAP family. Binds to caspase-9.

Its subcellular location is the cytoplasm. Protects against apoptosis mediated by BAX. The polypeptide is Baculoviral IAP repeat-containing protein 8 (BIRC8) (Gorilla gorilla gorilla (Western lowland gorilla)).